We begin with the raw amino-acid sequence, 1105 residues long: Serine/threonine-protein kinase 4 homolog B (1105 aa).

One can recognise a Protein kinase domain in the interval 23-274 (FDLIECLGRG…AKDLLKHSFF (252 aa)). Residues 29-37 (LGRGSFGSV) and lysine 52 contribute to the ATP site. Aspartate 142 (proton acceptor) is an active-site residue. 3 disordered regions span residues 348-396 (STQI…TKNN), 411-482 (SSSA…RQPA), and 495-541 (PSFG…SLPL). Composition is skewed to low complexity over residues 358–396 (QAQQQQQQAQQQQQQQQQQQQQYQPPSPNNNNRTTTKNN) and 411–437 (SSSASASTSPSPSSISSNGNKSGTTTN). Positions 438–458 (DYHTGNGRTSSSSPQFGLQHQ) are enriched in polar residues. Low complexity-rich tracts occupy residues 459 to 473 (NSSNSFPSSPNTVPS) and 513 to 541 (PIGSPITKRPTPTMQSSTTTTTSSSSLPL). Positions 516–1105 (SPITKRPTPT…SEFDLDFYNN (590 aa)) are calpain-like cysteine protease-like. Domain III stretches follow at residues 641 to 668 (EVSAKITMEPGYYVIIPATFEPNQEGSF), 791 to 830 (VHTQQQMPPGCYIIVPCTYDSRQEGSFTLTCYSDCQQGSI), 836 to 972 (SEQI…NVIQ), and 1076 to 1103 (VVIPSTFEPNIQDSFNLTIYSEFDLDFY).

It in the N-terminal section; belongs to the protein kinase superfamily. STE Ser/Thr protein kinase family. STE20 subfamily. The protein in the C-terminal section; belongs to the peptidase C2 family. It depends on Mn(2+) as a cofactor.

It catalyses the reaction L-seryl-[protein] + ATP = O-phospho-L-seryl-[protein] + ADP + H(+). It carries out the reaction L-threonyl-[protein] + ATP = O-phospho-L-threonyl-[protein] + ADP + H(+). Functionally, probable serine/threonine-protein kinase. This is Serine/threonine-protein kinase 4 homolog B (krsB) from Dictyostelium discoideum (Social amoeba).